The sequence spans 294 residues: 4-hydroxy-tetrahydrodipicolinate synthase (294 aa).

Pyruvate is bound at residue T47. Catalysis depends on Y135, which acts as the Proton donor/acceptor. Catalysis depends on K163, which acts as the Schiff-base intermediate with substrate. Residue V205 coordinates pyruvate.

Belongs to the DapA family. As to quaternary structure, homotetramer; dimer of dimers.

It localises to the cytoplasm. It catalyses the reaction L-aspartate 4-semialdehyde + pyruvate = (2S,4S)-4-hydroxy-2,3,4,5-tetrahydrodipicolinate + H2O + H(+). Its pathway is amino-acid biosynthesis; L-lysine biosynthesis via DAP pathway; (S)-tetrahydrodipicolinate from L-aspartate: step 3/4. Functionally, catalyzes the condensation of (S)-aspartate-beta-semialdehyde [(S)-ASA] and pyruvate to 4-hydroxy-tetrahydrodipicolinate (HTPA). The protein is 4-hydroxy-tetrahydrodipicolinate synthase of Rickettsia canadensis (strain McKiel).